We begin with the raw amino-acid sequence, 237 residues long: Aspartate/glutamate leucyltransferase (237 aa).

Belongs to the R-transferase family. Bpt subfamily.

The protein localises to the cytoplasm. It carries out the reaction N-terminal L-glutamyl-[protein] + L-leucyl-tRNA(Leu) = N-terminal L-leucyl-L-glutamyl-[protein] + tRNA(Leu) + H(+). The catalysed reaction is N-terminal L-aspartyl-[protein] + L-leucyl-tRNA(Leu) = N-terminal L-leucyl-L-aspartyl-[protein] + tRNA(Leu) + H(+). Its function is as follows. Functions in the N-end rule pathway of protein degradation where it conjugates Leu from its aminoacyl-tRNA to the N-termini of proteins containing an N-terminal aspartate or glutamate. In Shewanella amazonensis (strain ATCC BAA-1098 / SB2B), this protein is Aspartate/glutamate leucyltransferase.